Consider the following 953-residue polypeptide: Pyruvate, phosphate dikinase, chloroplastic (953 aa).

The N-terminal 77 residues, 1 to 77 (MMSSLSVEGM…VLNPVSPPVT (77 aa)), are a transit peptide targeting the chloroplast. Positions 55–74 (PELRSSGLTPPRAVLNPVSP) are disordered. The residue at position 533 (T533) is a Phosphothreonine; by PDRP1. The active-site Tele-phosphohistidine intermediate is H535. Residues R641, R698, E827, G848, T849, N850, and D851 each contribute to the substrate site. E827 contributes to the Mg(2+) binding site. D851 is a binding site for Mg(2+). The active-site Proton donor is the C913.

Belongs to the PEP-utilizing enzyme family. In terms of assembly, homotetramer. Mg(2+) serves as cofactor. Phosphorylation of Thr-533 in the dark inactivates the enzyme. Dephosphorylation upon light stimulation reactivates the enzyme.

The protein localises to the plastid. It is found in the chloroplast. The enzyme catalyses pyruvate + phosphate + ATP = phosphoenolpyruvate + AMP + diphosphate + H(+). Its pathway is photosynthesis; C4 acid pathway. Activated by light-induced dephosphorylation. Inhibited by dark-induced phosphorylation. Both reactions are catalyzed by PDRP1. Inactivated by cold due to the dissociation of the homotetramer. In terms of biological role, formation of phosphoenolpyruvate, which is the primary acceptor of CO(2) in C4 and some Crassulacean acid metabolism plants. This is Pyruvate, phosphate dikinase, chloroplastic from Flaveria bidentis (Coastal plain yellowtops).